Reading from the N-terminus, the 431-residue chain is Serine hydroxymethyltransferase (431 aa).

Residues Leu-121 and 125–127 contribute to the (6S)-5,6,7,8-tetrahydrofolate site; that span reads GHL. The residue at position 230 (Lys-230) is an N6-(pyridoxal phosphate)lysine. Residue 369 to 371 participates in (6S)-5,6,7,8-tetrahydrofolate binding; sequence SPF.

Belongs to the SHMT family. As to quaternary structure, homodimer. Requires pyridoxal 5'-phosphate as cofactor.

Its subcellular location is the cytoplasm. It carries out the reaction (6R)-5,10-methylene-5,6,7,8-tetrahydrofolate + glycine + H2O = (6S)-5,6,7,8-tetrahydrofolate + L-serine. The protein operates within one-carbon metabolism; tetrahydrofolate interconversion. It functions in the pathway amino-acid biosynthesis; glycine biosynthesis; glycine from L-serine: step 1/1. Functionally, catalyzes the reversible interconversion of serine and glycine with tetrahydrofolate (THF) serving as the one-carbon carrier. This reaction serves as the major source of one-carbon groups required for the biosynthesis of purines, thymidylate, methionine, and other important biomolecules. Also exhibits THF-independent aldolase activity toward beta-hydroxyamino acids, producing glycine and aldehydes, via a retro-aldol mechanism. The chain is Serine hydroxymethyltransferase from Cytophaga hutchinsonii (strain ATCC 33406 / DSM 1761 / CIP 103989 / NBRC 15051 / NCIMB 9469 / D465).